The chain runs to 596 residues: ATP-binding protein Uup (596 aa).

2 ABC transporter domains span residues 1 to 222 (MSLI…RIEK) and 290 to 516 (FKLD…SKIN). ATP is bound by residues 36–43 (GKNGAGKS) and 322–329 (GDNGCGKS). The C-terminal domain (CTD), binds DNA stretch occupies residues 519–596 (IKIKNNFKKE…LEKNIINTKI (78 aa)).

It belongs to the ABC transporter superfamily. ABCF family. Uup subfamily.

It is found in the cytoplasm. It carries out the reaction ATP + H2O = ADP + phosphate + H(+). In terms of biological role, probably plays a role in ribosome assembly or function. May be involved in resolution of branched DNA intermediates that result from template switching in postreplication gaps. Binds DNA and has ATPase activity. The sequence is that of ATP-binding protein Uup from Buchnera aphidicola subsp. Acyrthosiphon pisum (strain APS) (Acyrthosiphon pisum symbiotic bacterium).